We begin with the raw amino-acid sequence, 102 residues long: Small ribosomal subunit protein uS10 (102 aa).

It belongs to the universal ribosomal protein uS10 family. Part of the 30S ribosomal subunit.

Functionally, involved in the binding of tRNA to the ribosomes. The sequence is that of Small ribosomal subunit protein uS10 from Thermococcus kodakarensis (strain ATCC BAA-918 / JCM 12380 / KOD1) (Pyrococcus kodakaraensis (strain KOD1)).